Here is a 69-residue protein sequence, read N- to C-terminus: Protein transport protein Sec61 subunit gamma (69 aa).

Topologically, residues 1 to 40 are cytoplasmic; it reads MDILEETAAPLKDFAKNSIRLFKKCTKPDAQEFQKIALAT. Residues 41-61 traverse the membrane as a helical segment; the sequence is LIGFAIMGFIGFFVKLIHIPI. Residues 62–69 lie on the Extracellular side of the membrane; the sequence is NNILVGGV.

It belongs to the SecE/SEC61-gamma family. As to quaternary structure, heterotrimeric complex composed of SEC61-alpha, SEC61-beta and SEC61-gamma.

It is found in the endoplasmic reticulum membrane. Its function is as follows. Necessary for protein translocation in the endoplasmic reticulum. The chain is Protein transport protein Sec61 subunit gamma (sec61g) from Dictyostelium discoideum (Social amoeba).